The primary structure comprises 209 residues: Ribonuclease HII (209 aa).

Residues 25–209 (RRIAGIDEAG…ATFRGVREYL (185 aa)) enclose the RNase H type-2 domain. Aspartate 31, glutamate 32, and aspartate 123 together coordinate a divalent metal cation.

It belongs to the RNase HII family. The cofactor is Mn(2+). Mg(2+) is required as a cofactor.

Its subcellular location is the cytoplasm. The catalysed reaction is Endonucleolytic cleavage to 5'-phosphomonoester.. Endonuclease that specifically degrades the RNA of RNA-DNA hybrids. The sequence is that of Ribonuclease HII from Syntrophotalea carbinolica (strain DSM 2380 / NBRC 103641 / GraBd1) (Pelobacter carbinolicus).